The sequence spans 106 residues: UPF0060 membrane protein R01043 (106 aa).

Helical transmembrane passes span 5–25 (AIYF…WSWL), 31–51 (ALWL…LTMV), 61–81 (AAYG…AEGV), and 85–105 (HWDM…LAGP).

Belongs to the UPF0060 family.

Its subcellular location is the cell inner membrane. In Rhizobium meliloti (strain 1021) (Ensifer meliloti), this protein is UPF0060 membrane protein R01043.